A 423-amino-acid polypeptide reads, in one-letter code: Transmembrane protein 130 (423 aa).

The first 24 residues, Met-1 to Ala-24, serve as a signal peptide directing secretion. The Extracellular portion of the chain corresponds to Gly-25–Pro-339. N-linked (GlcNAc...) asparagine glycans are attached at residues Asn-34, Asn-197, and Asn-300. Residues Trp-147 to Ser-233 enclose the PKD domain. A helical membrane pass occupies residues Ala-340–Met-360. Over Thr-361–Val-423 the chain is Cytoplasmic.

It localises to the golgi apparatus membrane. In Pongo abelii (Sumatran orangutan), this protein is Transmembrane protein 130 (TMEM130).